The sequence spans 490 residues: Solute carrier family 2, facilitated glucose transporter member 1 (490 aa).

At methionine 1 to arginine 10 the chain is on the cytoplasmic side. A helical transmembrane segment spans residues leucine 11 to isoleucine 32. Residues asparagine 33–serine 65 lie on the Extracellular side of the membrane. An N-linked (GlcNAc...) asparagine glycan is attached at asparagine 44. A helical membrane pass occupies residues leucine 66 to valine 86. At asparagine 87 to phenylalanine 89 the chain is on the cytoplasmic side. Residues glycine 90–phenylalanine 111 traverse the membrane as a helical segment. Residues serine 112–glutamate 119 lie on the Extracellular side of the membrane. The helical transmembrane segment at methionine 120–valine 143 threads the bilayer. The Cytoplasmic segment spans residues glycine 144–alanine 154. Residues leucine 155–leucine 175 form a helical membrane-spanning segment. Glutamine 160 contributes to the D-glucose binding site. Topologically, residues aspartate 176 to leucine 184 are extracellular. The chain crosses the membrane as a helical span at residues tryptophan 185 to phenylalanine 205. At alanine 206–proline 270 the chain is on the cytoplasmic side. A helical transmembrane segment spans residues isoleucine 271 to tyrosine 292. Residues glutamine 281 to glutamine 282 and asparagine 287 each bind D-glucose. The Extracellular portion of the chain corresponds to serine 293–proline 305. Residues valine 306–valine 327 form a helical membrane-spanning segment. Asparagine 316 contacts D-glucose. Topologically, residues glutamate 328–arginine 333 are cytoplasmic. A helical membrane pass occupies residues threonine 334–leucine 354. Residues threonine 355 to serine 364 are Extracellular-facing. The helical transmembrane segment at tyrosine 365–tryptophan 387 threads the bilayer. 2 residues coordinate D-glucose: glutamate 379 and tryptophan 387. The Cytoplasmic portion of the chain corresponds to phenylalanine 388–proline 400. The chain crosses the membrane as a helical span at residues alanine 401–phenylalanine 421. Over glutamine 422 to cysteine 428 the chain is Extracellular. The helical transmembrane segment at glycine 429–phenylalanine 449 threads the bilayer. At lysine 450–valine 490 the chain is on the cytoplasmic side. A disordered region spans residues glycine 470–valine 490.

The protein belongs to the major facilitator superfamily. Sugar transporter (TC 2.A.1.1) family. Glucose transporter subfamily. Interacts with isoform 1 of BSG. In terms of tissue distribution, retinal cones (at protein level).

The protein localises to the cell membrane. The protein resides in the photoreceptor inner segment. It carries out the reaction D-glucose(out) = D-glucose(in). Its function is as follows. Facilitative glucose transporter, which is responsible for constitutive or basal glucose uptake. Has a very broad substrate specificity; can transport a wide range of aldoses including both pentoses and hexoses. Most important energy carrier of the brain: present at the blood-brain barrier and assures the energy-independent, facilitative transport of glucose into the brain. In association with BSG and NXNL1, promotes retinal cone survival by increasing glucose uptake into photoreceptors. Required for mesendoderm differentiation. This chain is Solute carrier family 2, facilitated glucose transporter member 1, found in Gallus gallus (Chicken).